Here is a 519-residue protein sequence, read N- to C-terminus: Zinc finger protein 692 (519 aa).

A disordered region spans residues 123-314 (GPSLSPTPSE…PAWDEDTAQI (192 aa)). Polar residues predominate over residues 145–155 (RSWCSEATSGQ). S162 carries the phosphoserine modification. A compositionally biased stretch (basic and acidic residues) spans 164–173 (HDERTQEARL). The span at 177-187 (VGPPPETFPPP) shows a compositional bias: pro residues. The segment covering 188–206 (GEEEGEEEEDNDEDEEEML) has biased composition (acidic residues). The residue at position 231 (S231) is a Phosphoserine. Over residues 247-266 (AALSSPLAVPALSASSLSSR) the composition is skewed to low complexity. The span at 277-303 (PQLSRTPQAAQQTEALASTGSQAQSAP) shows a compositional bias: polar residues. 5 consecutive C2H2-type zinc fingers follow at residues 328–353 (MPCD…KYQH), 359–383 (FSCP…MKLH), 389–411 (YICE…RRIH), 417–439 (LQCE…QRKH), and 448–471 (FPCE…SKSH). Positions 469-519 (KSHPALLLAPQESPSGPLEPCPSISAPGPLGSSEGSRPSASPQAPTLLPQQ) are disordered. Position 470 is a phosphoserine; by AMPK (S470). Residues 501–519 (SEGSRPSASPQAPTLLPQQ) are compositionally biased toward polar residues.

Belongs to the krueppel C2H2-type zinc-finger protein family. In terms of processing, phosphorylation at Ser-470 results in loss of DNA-binding activity. In terms of tissue distribution, ubiquitous. Highly expressed in brain, thymus and spleen.

It localises to the nucleus. In terms of biological role, may act as an transcriptional repressor for PCK1 gene expression, in turn may participate in the hepatic gluconeogenesis regulation through the activated AMPK signaling pathway. This is Zinc finger protein 692 (ZNF692) from Homo sapiens (Human).